Consider the following 1034-residue polypeptide: Beta-galactosidase (1034 aa).

Residues Asn-108 and Asp-207 each contribute to the substrate site. Residue Asp-207 participates in Na(+) binding. 3 residues coordinate Mg(2+): Glu-423, His-425, and Glu-468. Residues Glu-468 and 544 to 547 (EYAH) contribute to the substrate site. Glu-468 (proton donor) is an active-site residue. Catalysis depends on Glu-544, which acts as the Nucleophile. Position 604 (Asn-604) interacts with Mg(2+). Positions 608 and 611 each coordinate Na(+). Residues Asn-611 and Trp-1010 each contribute to the substrate site.

The protein belongs to the glycosyl hydrolase 2 family. As to quaternary structure, homotetramer. The cofactor is Mg(2+). Na(+) serves as cofactor.

It catalyses the reaction Hydrolysis of terminal non-reducing beta-D-galactose residues in beta-D-galactosides.. In Klebsiella pneumoniae, this protein is Beta-galactosidase.